The sequence spans 291 residues: Protease HtpX homolog (291 aa).

Transmembrane regions (helical) follow at residues 4–24 (IALF…VASL) and 38–58 (LGAL…ISLL). Zn(2+) is bound at residue histidine 144. Glutamate 145 is a catalytic residue. A Zn(2+)-binding site is contributed by histidine 148. Transmembrane regions (helical) follow at residues 159–179 (LIQG…GYAV) and 199–219 (VTTI…VAWF). A Zn(2+)-binding site is contributed by glutamate 224.

The protein belongs to the peptidase M48B family. It depends on Zn(2+) as a cofactor.

The protein localises to the cell inner membrane. The chain is Protease HtpX homolog from Paracidovorax citrulli (strain AAC00-1) (Acidovorax citrulli).